The following is a 255-amino-acid chain: Hydroxyacylglutathione hydrolase (255 aa).

Residues His56, His58, Asp60, His61, His114, Asp133, and His171 each contribute to the Zn(2+) site.

This sequence belongs to the metallo-beta-lactamase superfamily. Glyoxalase II family. Monomer. Zn(2+) is required as a cofactor.

It catalyses the reaction an S-(2-hydroxyacyl)glutathione + H2O = a 2-hydroxy carboxylate + glutathione + H(+). It participates in secondary metabolite metabolism; methylglyoxal degradation; (R)-lactate from methylglyoxal: step 2/2. Its function is as follows. Thiolesterase that catalyzes the hydrolysis of S-D-lactoyl-glutathione to form glutathione and D-lactic acid. The polypeptide is Hydroxyacylglutathione hydrolase (Cereibacter sphaeroides (strain ATCC 17023 / DSM 158 / JCM 6121 / CCUG 31486 / LMG 2827 / NBRC 12203 / NCIMB 8253 / ATH 2.4.1.) (Rhodobacter sphaeroides)).